Here is an 84-residue protein sequence, read N- to C-terminus: Hepcidin (84 aa).

Residues 1–24 (MALSSQIWAACLLLLLLLASLTSG) form the signal peptide. Residues 25–54 (SVFPQQTGQLAELQPQDRAGARASWMPMFQ) constitute a propeptide that is removed on maturation. Intrachain disulfides connect Cys-66-Cys-82, Cys-69-Cys-72, Cys-70-Cys-78, and Cys-73-Cys-81.

It belongs to the hepcidin family. As to quaternary structure, interacts with SLC40A1; this interaction promotes SLC40A1 rapid ubiquitination. Highest expression in liver and to a lesser extent in heart and brain. Low levels in lung, tonsils, salivary gland, trachea, prostate gland, adrenal gland and thyroid gland. Secreted into the urine and blood. Expressed by hepatocytes.

The protein localises to the secreted. Its function is as follows. Liver-produced hormone that constitutes the main circulating regulator of iron absorption and distribution across tissues. Acts by promoting endocytosis and degradation of ferroportin/SLC40A1, leading to the retention of iron in iron-exporting cells and decreased flow of iron into plasma. Controls the major flows of iron into plasma: absorption of dietary iron in the intestine, recycling of iron by macrophages, which phagocytose old erythrocytes and other cells, and mobilization of stored iron from hepatocytes. Has strong antimicrobial activity against E.coli ML35P N.cinerea and weaker against S.epidermidis, S.aureus and group b streptococcus bacteria. Active against the fungus C.albicans. No activity against P.aeruginosa. This chain is Hepcidin, found in Homo sapiens (Human).